We begin with the raw amino-acid sequence, 413 residues long: 3-isopropylmalate dehydratase large subunit (413 aa).

Positions 293, 353, and 356 each coordinate [4Fe-4S] cluster.

The protein belongs to the aconitase/IPM isomerase family. LeuC type 2 subfamily. As to quaternary structure, heterodimer of LeuC and LeuD. [4Fe-4S] cluster is required as a cofactor.

The enzyme catalyses (2R,3S)-3-isopropylmalate = (2S)-2-isopropylmalate. The protein operates within amino-acid biosynthesis; L-leucine biosynthesis; L-leucine from 3-methyl-2-oxobutanoate: step 2/4. In terms of biological role, catalyzes the isomerization between 2-isopropylmalate and 3-isopropylmalate, via the formation of 2-isopropylmaleate. The sequence is that of 3-isopropylmalate dehydratase large subunit from Picrophilus torridus (strain ATCC 700027 / DSM 9790 / JCM 10055 / NBRC 100828 / KAW 2/3).